The sequence spans 344 residues: L-rhamnose-proton symporter (344 aa).

The next 10 membrane-spanning stretches (helical) occupy residues Ile-5–Pro-25, Trp-38–Leu-58, Ile-72–Leu-92, Met-101–Ile-121, Thr-137–Leu-157, Leu-175–Ala-195, Leu-214–Ile-234, Ile-259–Gly-279, Phe-289–Leu-309, and Val-323–Ala-343.

It belongs to the L-rhamnose transporter (TC 2.A.7.6) family.

It is found in the cell inner membrane. It carries out the reaction L-rhamnopyranose(in) + H(+)(in) = L-rhamnopyranose(out) + H(+)(out). Uptake of L-rhamnose across the cytoplasmic membrane with the concomitant transport of protons into the cell (symport system). The sequence is that of L-rhamnose-proton symporter from Mannheimia succiniciproducens (strain KCTC 0769BP / MBEL55E).